The following is a 293-amino-acid chain: Ribosomal protein L11 methyltransferase (293 aa).

T145, G166, D188, and N230 together coordinate S-adenosyl-L-methionine.

Belongs to the methyltransferase superfamily. PrmA family.

The protein resides in the cytoplasm. The catalysed reaction is L-lysyl-[protein] + 3 S-adenosyl-L-methionine = N(6),N(6),N(6)-trimethyl-L-lysyl-[protein] + 3 S-adenosyl-L-homocysteine + 3 H(+). Methylates ribosomal protein L11. In Citrobacter koseri (strain ATCC BAA-895 / CDC 4225-83 / SGSC4696), this protein is Ribosomal protein L11 methyltransferase.